Here is a 238-residue protein sequence, read N- to C-terminus: Ribonuclease PH (238 aa).

Phosphate-binding positions include Arg86 and 124–126 (GTR).

It belongs to the RNase PH family. In terms of assembly, homohexameric ring arranged as a trimer of dimers.

It carries out the reaction tRNA(n+1) + phosphate = tRNA(n) + a ribonucleoside 5'-diphosphate. In terms of biological role, phosphorolytic 3'-5' exoribonuclease that plays an important role in tRNA 3'-end maturation. Removes nucleotide residues following the 3'-CCA terminus of tRNAs; can also add nucleotides to the ends of RNA molecules by using nucleoside diphosphates as substrates, but this may not be physiologically important. Probably plays a role in initiation of 16S rRNA degradation (leading to ribosome degradation) during starvation. This Vibrio atlanticus (strain LGP32) (Vibrio splendidus (strain Mel32)) protein is Ribonuclease PH.